A 915-amino-acid polypeptide reads, in one-letter code: DNA (cytosine-5)-methyltransferase 2 (915 aa).

Positions 1 to 14 (MAPSSPSSARPTRA) are enriched in low complexity. A disordered region spans residues 1–171 (MAPSSPSSAR…STAANKPEED (171 aa)). The segment covering 15 to 30 (SGRERSAMAEEIHQNQ) has biased composition (basic and acidic residues). Residues 42–57 (AKRRRKAASSGKKPKP) are compositionally biased toward basic residues. The span at 71–80 (KKGETEKTEP) shows a compositional bias: basic and acidic residues. Acidic residues predominate over residues 81–108 (VVDDVCAEEPDEEELAMGEEEAEAEEQA). Positions 109–119 (MQEVVAAVAAG) are enriched in low complexity. The region spanning 188-313 (IVYCLGDDVY…VAYSTFANIS (126 aa)) is the BAH domain. Positions 315 to 328 (ENGQSGSETASGIS) are enriched in polar residues. Residues 315–338 (ENGQSGSETASGISSDDAGLETSS) are disordered. In terms of domain architecture, SAM-dependent MTase C5-type spans 345–876 (ATLLDLYSGC…YCLGQAYLGE (532 aa)). Residues 445-508 (FVVQKLIGIR…EGRKRKILPL (64 aa)) enclose the Chromo domain. C521 is an active-site residue.

It belongs to the class I-like SAM-binding methyltransferase superfamily. C5-methyltransferase family.

The protein localises to the nucleus. It catalyses the reaction a 2'-deoxycytidine in DNA + S-adenosyl-L-methionine = a 5-methyl-2'-deoxycytidine in DNA + S-adenosyl-L-homocysteine + H(+). May be involved in the CpXpG methylation and in gene silencing. The chain is DNA (cytosine-5)-methyltransferase 2 (ZMET5) from Zea mays (Maize).